Reading from the N-terminus, the 84-residue chain is Putative membrane protein insertion efficiency factor (84 aa).

The disordered stretch occupies residues glycine 63–serine 84.

Belongs to the UPF0161 family.

The protein resides in the cell membrane. Could be involved in insertion of integral membrane proteins into the membrane. The protein is Putative membrane protein insertion efficiency factor of Streptococcus mutans serotype c (strain ATCC 700610 / UA159).